A 283-amino-acid chain; its full sequence is Putative pyruvate, phosphate dikinase regulatory protein (283 aa).

Position 156 to 163 (156 to 163 (GLSRAGKT)) interacts with ADP.

The protein belongs to the pyruvate, phosphate/water dikinase regulatory protein family. PDRP subfamily.

The catalysed reaction is N(tele)-phospho-L-histidyl/L-threonyl-[pyruvate, phosphate dikinase] + ADP = N(tele)-phospho-L-histidyl/O-phospho-L-threonyl-[pyruvate, phosphate dikinase] + AMP + H(+). The enzyme catalyses N(tele)-phospho-L-histidyl/O-phospho-L-threonyl-[pyruvate, phosphate dikinase] + phosphate + H(+) = N(tele)-phospho-L-histidyl/L-threonyl-[pyruvate, phosphate dikinase] + diphosphate. In terms of biological role, bifunctional serine/threonine kinase and phosphorylase involved in the regulation of the pyruvate, phosphate dikinase (PPDK) by catalyzing its phosphorylation/dephosphorylation. The polypeptide is Putative pyruvate, phosphate dikinase regulatory protein (Desulfotalea psychrophila (strain LSv54 / DSM 12343)).